We begin with the raw amino-acid sequence, 398 residues long: Serpin-Z1C (398 aa).

Positions Gly-343 to Phe-367 are RCL.

Belongs to the serpin family.

Its function is as follows. Inhibits chymotrypsin and cathepsin G in vitro. The chain is Serpin-Z1C from Triticum aestivum (Wheat).